A 787-amino-acid chain; its full sequence is Serine proteinase stubble (787 aa).

Residues 1 to 22 are disordered; the sequence is MKQPTLIRPRLRHRRSTPAAAT. Residues 1–58 are Cytoplasmic-facing; the sequence is MKQPTLIRPRLRHRRSTPAAATKMCPKRHWLVNNRAAGSRGSGGAAARSRRSLDQIVE. The chain crosses the membrane as a helical; Signal-anchor for type II membrane protein span at residues 59–80; the sequence is VLVALIVVNCLATAAAALITPP. Topologically, residues 81 to 787 are extracellular; that stretch reads DSLESLGSLG…FTPWILEHVR (707 aa). The N-linked (GlcNAc...) asparagine glycan is linked to Asn177. Positions 225–516 are disordered; sequence AGTLVIRPSG…EISDSSIPDA (292 aa). Composition is skewed to low complexity over residues 262–280, 287–303, 358–368, 393–438, and 449–485; these read SASHPSSSSSSSSSSNPNS, QQQQQQQHQQNQQNHWQ, PSTSTSTTSTS, SLAA…RTTT, and TTATSSSSTSTTSSKTPTTTRPISSSSSSSSGIVTSS. Residues 502–512 are compositionally biased toward polar residues; that stretch reads GIETNEISDSS. 2 disulfides stabilise this stretch: Cys532/Cys660 and Cys575/Cys591. The Peptidase S1 domain occupies 544–787; it reads IVGGKSAAFG…FTPWILEHVR (244 aa). Catalysis depends on charge relay system residues His590 and Asp640. Residue Asn672 is glycosylated (N-linked (GlcNAc...) asparagine). 2 disulfides stabilise this stretch: Cys704/Cys723 and Cys734/Cys763. Residue Ser738 is the Charge relay system of the active site.

This sequence belongs to the peptidase S1 family. May activate itself by proteolytic cleavage.

The protein resides in the membrane. Functionally, hormone dependent protease required for epithelial morphogenesis, including the formation of bristles, legs, and wings. Has a dual function, detaches imaginal disk cells from extracellular matrices through its extracellular proteolytic domain and transmits an outside-to-inside signal to its intracellular domain to modify the cytoskeleton during morphogenesis. The polypeptide is Serine proteinase stubble (Sb) (Drosophila melanogaster (Fruit fly)).